The sequence spans 389 residues: Formate-dependent phosphoribosylglycinamide formyltransferase (389 aa).

N(1)-(5-phospho-beta-D-ribosyl)glycinamide is bound by residues 21-22 (EL) and E81. ATP is bound by residues R113, K154, 159 to 164 (SSGKGQ), 194 to 197 (EEFI), and E202. An ATP-grasp domain is found at 118–307 (RLAAEKLGLK…EFEIHVRAIL (190 aa)). E266 and E278 together coordinate Mg(2+). N(1)-(5-phospho-beta-D-ribosyl)glycinamide-binding positions include D285, K353, and 360-361 (RR).

It belongs to the PurK/PurT family. Homodimer.

It catalyses the reaction N(1)-(5-phospho-beta-D-ribosyl)glycinamide + formate + ATP = N(2)-formyl-N(1)-(5-phospho-beta-D-ribosyl)glycinamide + ADP + phosphate + H(+). Its pathway is purine metabolism; IMP biosynthesis via de novo pathway; N(2)-formyl-N(1)-(5-phospho-D-ribosyl)glycinamide from N(1)-(5-phospho-D-ribosyl)glycinamide (formate route): step 1/1. In terms of biological role, involved in the de novo purine biosynthesis. Catalyzes the transfer of formate to 5-phospho-ribosyl-glycinamide (GAR), producing 5-phospho-ribosyl-N-formylglycinamide (FGAR). Formate is provided by PurU via hydrolysis of 10-formyl-tetrahydrofolate. The sequence is that of Formate-dependent phosphoribosylglycinamide formyltransferase from Methanocaldococcus jannaschii (strain ATCC 43067 / DSM 2661 / JAL-1 / JCM 10045 / NBRC 100440) (Methanococcus jannaschii).